Consider the following 376-residue polypeptide: Formate dehydrogenase 2 (376 aa).

The substrate site is built by Val-97 and Asn-121. Residues 176–177 (RI), Asp-197, 244–248 (PLHKD), Thr-270, Asp-296, and 325–328 (HISG) each bind NAD(+).

The protein belongs to the D-isomer specific 2-hydroxyacid dehydrogenase family. FDH subfamily. In terms of assembly, homodimer.

The protein resides in the cytoplasm. It catalyses the reaction formate + NAD(+) = CO2 + NADH. Functionally, catalyzes the NAD(+)-dependent oxidation of formate to carbon dioxide. Formate oxidation is the final step in the methanol oxidation pathway in methylotrophic microorganisms. Has a role in the detoxification of exogenous formate in non-methylotrophic organisms. This is Formate dehydrogenase 2 (FDH2) from Saccharomyces cerevisiae (strain CEN.PK113-7D) (Baker's yeast).